The sequence spans 623 residues: Chaperone protein HtpG (623 aa).

The segment at Met-1–Arg-341 is a; substrate-binding. The tract at residues Glu-342–Lys-549 is b. Residues Ile-550–Lys-623 are c.

This sequence belongs to the heat shock protein 90 family. In terms of assembly, homodimer.

It is found in the cytoplasm. Its function is as follows. Molecular chaperone. Has ATPase activity. This chain is Chaperone protein HtpG, found in Clostridium perfringens (strain 13 / Type A).